The sequence spans 816 residues: Coiled-coil and C2 domain-containing protein 1-like (816 aa).

The span at 1–11 shows a compositional bias: basic and acidic residues; that stretch reads MFSRKKPEPAK. 3 disordered regions span residues 1–135, 157–176, and 186–269; these read MFSR…TFLP, ANAK…RGLK, and AAGK…RQTD. Residues 25-47 are compositionally biased toward acidic residues; the sequence is IPDDFDPSAGYGEDDGGDSDLEA. Positions 73–85 are enriched in basic and acidic residues; the sequence is DLDKMIADSLRDV. Residues 86 to 100 show a composition bias toward acidic residues; sequence SDDDDDDNLESDPDL. The span at 122–131 shows a compositional bias: low complexity; it reads PPAASEEPVQ. Positions 145 to 200 are DM14 1; the sequence is IKQRLEMYKQAEANAKTAGDSGKARRFGRGLKTLKDLHRQAAAGKSINVDDIPPEV. Residues 220-243 are compositionally biased toward pro residues; it reads PSTPASPPPVPSRAAPDPPTPGTP. DM14 stretches follow at residues 265–317 and 365–419; these read SRQT…MPPP and LQQR…LPVP. Positions 355 to 382 form a coiled coil; that stretch reads LAAATNMLEALQQRLEKYQSVEAAAKAE. Residues 418-492 form a disordered region; the sequence is VPPGFGPLPT…TRTSGNQQKN (75 aa). The segment covering 424–433 has biased composition (low complexity); it reads PLPTADAAPV. The segment covering 434–449 has biased composition (pro residues); sequence APTPSLPTSPTSPPPT. The span at 450–471 shows a compositional bias: low complexity; sequence ASTSAGGTPSSSSATTPTAPRK. A compositionally biased stretch (polar residues) spans 483 to 492; it reads TRTSGNQQKN. The DM14 4 stretch occupies residues 502–556; that stretch reads LLERQKEFKLAAIEAKKAGEIDQAKEYLKIFKGFDSLLNAASSGLPVDLSTLPVP. The region spanning 637–776 is the C2 domain; it reads RKNEPLPKFH…ETKCEIHDTY (140 aa).

This sequence belongs to the CC2D1 family. As to quaternary structure, interacts (via DM14 domains 1 and 3) with shrb; the interaction is direct and blocks access to the surface involved in shrb polymerization. This interaction may be required for the ESCRT-III complex role in multivesicular body formation.

The protein resides in the cytoplasm. The protein localises to the cytosol. It is found in the apicolateral cell membrane. Its subcellular location is the cell cortex. It localises to the endosome. Functionally, phosphatidyl inositol monophosphate binding protein involved in endosomal protein sorting through regulation of the endosomal sorting required for transport (ESCRT) pathway. Required for full activity of the ESCRT-III complex core component shrb/shrub, probably by preventing its inappropriate polymerisation. Required, but not essential, for the efficient generation of intraluminal vesicles (ILVs) in multivesicular bodies (MVBs). Involved in a late stage of the endosomal pathway targeting transmembrane proteins of the plasma membrane for lysosomal degradation. Plays a critical role in regulation of multiple signal transduction pathways, including the Notch and BMP/decapentaplegic (dpp) signaling pathways, through targeting of membrane bound receptors to multivesicular bodies, isolating them from the cytoplasm and targeting them for lysosomal degradation. Involved in targeting N/Notch for endosomal degradation, negatively regulating the Notch signaling pathway. Regulates Notch signaling in imaginal disk cells and follicle cells during oogenesis and multiple developmental processes, including development of wings, veins, legs, eyes and bristles. Restricts the activity of Notch to the dorsoventral (D/V) boundary of the wing imaginal disk. In external sensory organ development regulates Notch signaling during asymmetric cell division and differentiation of sensory organ precursor cells. May be involved in regulation of apoptosis and cell growth independent of Notch signaling. Involved in targeting tkv for endosomal degradation, negatively regulating the BMP/decapentaplegic (dpp) signaling pathway. Regulates the BMP/dpp signaling pathway in follicle cells during oogenesis, but not in imaginal disk cells during wing development. May be involved in differentiation or morphogenesis of peripodial epithelial cells in the developing imaginal disk. Involved in abscission of germline cells during oogenesis. This Drosophila melanogaster (Fruit fly) protein is Coiled-coil and C2 domain-containing protein 1-like.